The primary structure comprises 377 residues: Probable sensor histidine kinase HK (377 aa).

Disordered regions lie at residues 1-169 (MAHP…RPAD) and 346-377 (LPTP…TSDQ). The segment covering 10–54 (RLQRRHGARSGSSRCRHRRPVPRRRSRSRPRWRAARAHRRHHRRS) has biased composition (basic residues). Residues 84 to 98 (RRPDPRGGANTDHHA) show a composition bias toward basic and acidic residues. 2 stretches are compositionally biased toward basic residues: residues 99 to 115 (APRH…RRRD) and 137 to 146 (TTVRRRRQPR). The Histidine kinase domain maps to 146-350 (RITHPVGTAD…ELRITLPTPR (205 aa)). His149 bears the Phosphohistidine; by autocatalysis mark. Basic and acidic residues predominate over residues 352-377 (PFHEELPRITSSDTKDPNREHDTSDQ).

Autophosphorylated.

It carries out the reaction ATP + protein L-histidine = ADP + protein N-phospho-L-histidine.. In terms of biological role, member of the two-component system HK/TcrA. Phosphorylates TcrA. The protein is Probable sensor histidine kinase HK of Mycobacterium tuberculosis (strain CDC 1551 / Oshkosh).